The chain runs to 365 residues: Metallophosphoesterase 1 homolog (365 aa).

The helical transmembrane segment at 10-30 (PILLAIILVVYNEYFIFFIAF) threads the bilayer. Positions 54, 96, 132, 208, 262, and 264 each coordinate a divalent metal cation. Residues 319–339 (ILQIMVYIFGGIGIVILAFIL) traverse the membrane as a helical segment.

Belongs to the metallophosphoesterase superfamily. MPPE1 family. The cofactor is Mn(2+).

The protein resides in the endoplasmic reticulum-Golgi intermediate compartment membrane. The protein localises to the golgi apparatus. Its subcellular location is the cis-Golgi network membrane. Metallophosphoesterase required for transport of GPI-anchor proteins from the endoplasmic reticulum to the Golgi. Acts in lipid remodeling steps of GPI-anchor maturation by mediating the removal of a side-chain ethanolamine-phosphate (EtNP) from the second Man (Man2) of the GPI intermediate, an essential step for efficient transport of GPI-anchor proteins. The chain is Metallophosphoesterase 1 homolog from Caenorhabditis elegans.